The primary structure comprises 212 residues: Large ribosomal subunit protein uL3 (212 aa).

The protein belongs to the universal ribosomal protein uL3 family. In terms of assembly, part of the 50S ribosomal subunit. Forms a cluster with proteins L14 and L19.

Its function is as follows. One of the primary rRNA binding proteins, it binds directly near the 3'-end of the 23S rRNA, where it nucleates assembly of the 50S subunit. The protein is Large ribosomal subunit protein uL3 of Ruminiclostridium cellulolyticum (strain ATCC 35319 / DSM 5812 / JCM 6584 / H10) (Clostridium cellulolyticum).